A 625-amino-acid polypeptide reads, in one-letter code: Clathrin interactor 1 (625 aa).

One can recognise an ENTH domain in the interval 16-149; it reads NVVMNYSEIE…QDDDRLREER (134 aa). Arg-29 provides a ligand contact to a 1,2-diacyl-sn-glycero-3-phospho-(1D-myo-inositol-4,5-bisphosphate). The interval 52-54 is interaction with VTI1B; sequence FMY. Arg-67 is an a 1,2-diacyl-sn-glycero-3-phospho-(1D-myo-inositol-4,5-bisphosphate) binding site. Interaction with VTI1B regions lie at residues 94-96 and 142-153; these read SER and DDRLREERKKAK. Ser-163, Ser-166, Ser-173, Ser-205, Ser-210, Ser-227, Ser-245, and Ser-299 each carry phosphoserine. Residues 219-331 are disordered; sequence FRRKDREDSP…SSGDLVDLFD (113 aa). Residues 222–239 show a composition bias toward basic and acidic residues; the sequence is KDREDSPERCSDSDEEKK. The residue at position 308 (Thr-308) is a Phosphothreonine. The span at 308-323 shows a compositional bias: low complexity; the sequence is TPQSSVKTSVPSSKSS. Ser-312 bears the Phosphoserine mark. The tract at residues 340 to 352 is interaction with AP1G1, AP1G2 and GGA2; the sequence is SADLFGGFADFGS. Positions 368 to 380 are interaction with AP1G1 and AP1G2; that stretch reads GNGDFGDWSAFNQ. Residue Ser-624 is modified to Phosphoserine.

Belongs to the epsin family. Binds clathrin heavy chain and AP-2. Interacts with VTI1B. Interacts with GGA2 (via GAE domain). Interacts with AP1G1 (via GAE domain). Interacts with AP1G2 (via GAE domain). As to expression, ubiquitously expressed at low to intermediate levels.

It is found in the cytoplasm. Its subcellular location is the perinuclear region. The protein resides in the membrane. It localises to the cytoplasmic vesicle. The protein localises to the clathrin-coated vesicle. Functionally, binds to membranes enriched in phosphatidylinositol 4,5-bisphosphate (PtdIns(4,5)P2). May have a role in transport via clathrin-coated vesicles from the trans-Golgi network to endosomes. Stimulates clathrin assembly. In Homo sapiens (Human), this protein is Clathrin interactor 1 (CLINT1).